Consider the following 142-residue polypeptide: Domesticated amidase effector 2 (142 aa).

Positions 1–35 (MKLFLISAALVVLGLAAVADAIGCSDPSPFQGRWV) are cleaved as a signal peptide. Residues cysteine 43 and histidine 94 contribute to the active site.

The protein belongs to the cell wall amidase Dae2/Tae2-like family. May be post-translationally modified, since the saliva wild-type protein is slightly heavier than the recombinant one. In terms of tissue distribution, detected in salivary glands and in the gut (at protein level).

The protein localises to the secreted. Tick gut and saliva antibacterial peptide that directly antagonizes host skin commensals which enter the ticks during feeding. Acts as a cell wall hydrolase that cleaves the bond between gamma-D-glutamate-meso-diaminopimelate of a peptide stem and D-alanine of another peptide stem in peptidoglycans. In vitro, degrades peptidoglycans from both Gram-negative and Gram-positive bacteria. Is not able to traverse the protective outer membrane of Gram-negative bacteria. Is not able to kill Borrelia burgdorferi, one of the Lyme disease-causing bacteria. This is Domesticated amidase effector 2 from Ixodes scapularis (Black-legged tick).